The primary structure comprises 365 residues: Cytochrome P450 71A3 (365 aa).

Belongs to the cytochrome P450 family. Heme serves as cofactor.

May have a role in maturation, such as during flavor formation or other metabolite production specific to aging tissues. This is Cytochrome P450 71A3 (CYP71A3) from Solanum melongena (Eggplant).